Here is a 184-residue protein sequence, read N- to C-terminus: Outer-membrane lipoprotein carrier protein (184 aa).

An N-terminal signal peptide occupies residues 1-19; sequence MRAFLKILMVLIFMSVAYA.

It belongs to the LolA family. As to quaternary structure, monomer.

The protein localises to the periplasm. Participates in the translocation of lipoproteins from the inner membrane to the outer membrane. Only forms a complex with a lipoprotein if the residue after the N-terminal Cys is not an aspartate (The Asp acts as a targeting signal to indicate that the lipoprotein should stay in the inner membrane). In Helicobacter pylori (strain HPAG1), this protein is Outer-membrane lipoprotein carrier protein.